Consider the following 322-residue polypeptide: Large ribosomal subunit protein uL10 (322 aa).

The interval 294–322 (APAAAAKAEKEEEPAEESDDEMGFGLFDE) is disordered. The span at 304 to 322 (EEEPAEESDDEMGFGLFDE) shows a compositional bias: acidic residues.

Belongs to the universal ribosomal protein uL10 family. In terms of assembly, P0 forms a pentameric complex by interaction with dimers of P1 and P2. In terms of processing, phosphorylated.

Its function is as follows. Ribosomal protein P0 is the functional equivalent of E.coli protein L10. This is Large ribosomal subunit protein uL10 from Lupinus luteus (European yellow lupine).